Here is a 184-residue protein sequence, read N- to C-terminus: Oligoribonuclease (184 aa).

The Exonuclease domain occupies 10-172 (LVWVDCEMTG…ADVLESIAEL (163 aa)). Y129 is a catalytic residue.

The protein belongs to the oligoribonuclease family.

It localises to the cytoplasm. Its function is as follows. 3'-to-5' exoribonuclease specific for small oligoribonucleotides. This Tropheryma whipplei (strain Twist) (Whipple's bacillus) protein is Oligoribonuclease.